Reading from the N-terminus, the 381-residue chain is Chaperone protein DnaJ (381 aa).

The J domain occupies 5–70 (DYYDVLGVSK…EKKAAYDRFG (66 aa)). A CR-type zinc finger spans residues 140–218 (GLQKTINVPT…CRGQGRVEKD (79 aa)). 8 residues coordinate Zn(2+): cysteine 153, cysteine 156, cysteine 170, cysteine 173, cysteine 192, cysteine 195, cysteine 206, and cysteine 209. 4 CXXCXGXG motif repeats span residues 153–160 (CSSCEGTG), 170–177 (CPTCSGMG), 192–199 (CPTCSGLG), and 206–213 (CKSCRGQG).

This sequence belongs to the DnaJ family. In terms of assembly, homodimer. It depends on Zn(2+) as a cofactor.

Its subcellular location is the cytoplasm. In terms of biological role, participates actively in the response to hyperosmotic and heat shock by preventing the aggregation of stress-denatured proteins and by disaggregating proteins, also in an autonomous, DnaK-independent fashion. Unfolded proteins bind initially to DnaJ; upon interaction with the DnaJ-bound protein, DnaK hydrolyzes its bound ATP, resulting in the formation of a stable complex. GrpE releases ADP from DnaK; ATP binding to DnaK triggers the release of the substrate protein, thus completing the reaction cycle. Several rounds of ATP-dependent interactions between DnaJ, DnaK and GrpE are required for fully efficient folding. Also involved, together with DnaK and GrpE, in the DNA replication of plasmids through activation of initiation proteins. This Ruegeria pomeroyi (strain ATCC 700808 / DSM 15171 / DSS-3) (Silicibacter pomeroyi) protein is Chaperone protein DnaJ.